We begin with the raw amino-acid sequence, 426 residues long: 3-phosphoshikimate 1-carboxyvinyltransferase (426 aa).

3-phosphoshikimate contacts are provided by Lys-22, Ser-23, and Arg-27. Lys-22 is a phosphoenolpyruvate binding site. 2 residues coordinate phosphoenolpyruvate: Gly-96 and Arg-124. 3-phosphoshikimate contacts are provided by Ser-170, Ser-171, Gln-172, Ser-198, Asp-314, Asn-337, and Lys-341. Gln-172 contacts phosphoenolpyruvate. The Proton acceptor role is filled by Asp-314. Phosphoenolpyruvate is bound by residues Arg-345, Arg-387, and Lys-412.

Belongs to the EPSP synthase family. As to quaternary structure, monomer.

The protein resides in the cytoplasm. The catalysed reaction is 3-phosphoshikimate + phosphoenolpyruvate = 5-O-(1-carboxyvinyl)-3-phosphoshikimate + phosphate. It participates in metabolic intermediate biosynthesis; chorismate biosynthesis; chorismate from D-erythrose 4-phosphate and phosphoenolpyruvate: step 6/7. Its function is as follows. Catalyzes the transfer of the enolpyruvyl moiety of phosphoenolpyruvate (PEP) to the 5-hydroxyl of shikimate-3-phosphate (S3P) to produce enolpyruvyl shikimate-3-phosphate and inorganic phosphate. The sequence is that of 3-phosphoshikimate 1-carboxyvinyltransferase from Vibrio atlanticus (strain LGP32) (Vibrio splendidus (strain Mel32)).